The sequence spans 458 residues: Mitochondrial-processing peptidase subunit beta (458 aa).

Residues 1–41 (MYRRLASGLYQTSQRRIAQVQPKSVFVPETIVTTLPNGFRV) constitute a mitochondrion transit peptide. A Zn(2+)-binding site is contributed by histidine 73. The active-site Proton acceptor is glutamate 76. Residues histidine 77 and glutamate 153 each coordinate Zn(2+).

The protein belongs to the peptidase M16 family. Heterodimer of mppa-1 (alpha) and mppb-1 (beta) subunits, forming the mitochondrial processing protease (MPP) in which mppa-1 is involved in substrate recognition and binding and mppb-1 is the catalytic subunit. It depends on Zn(2+) as a cofactor.

The protein resides in the mitochondrion matrix. The catalysed reaction is Release of N-terminal transit peptides from precursor proteins imported into the mitochondrion, typically with Arg in position P2.. Binding to mppa-1 is required for catalytic activity. Inhibited by metal chelator ethylenediaminetetraacetic acid (EDTA). In terms of biological role, catalytic subunit of the essential mitochondrial processing protease (MPP), which cleaves the mitochondrial sequence off newly imported precursors proteins. Preferentially, cleaves after an arginine at position P2. The chain is Mitochondrial-processing peptidase subunit beta from Caenorhabditis elegans.